The following is a 446-amino-acid chain: Phosphoglucosamine mutase (446 aa).

The Phosphoserine intermediate role is filled by serine 100. Mg(2+) is bound by residues serine 100, aspartate 241, aspartate 243, and aspartate 245. Serine 100 carries the post-translational modification Phosphoserine.

It belongs to the phosphohexose mutase family. Requires Mg(2+) as cofactor. Activated by phosphorylation.

It catalyses the reaction alpha-D-glucosamine 1-phosphate = D-glucosamine 6-phosphate. Catalyzes the conversion of glucosamine-6-phosphate to glucosamine-1-phosphate. The sequence is that of Phosphoglucosamine mutase from Methylobacterium sp. (strain 4-46).